The chain runs to 647 residues: Chaperone protein DnaK (647 aa).

T199 is modified (phosphothreonine; by autocatalysis). The disordered stretch occupies residues 602 to 647 (MYAQEQAQAGQQAGPGAGSASAGQSGEKPVEGEVVDAEFEEVKDKK). Low complexity predominate over residues 604–627 (AQEQAQAGQQAGPGAGSASAGQSG).

Belongs to the heat shock protein 70 family.

Acts as a chaperone. In Nitrosomonas eutropha (strain DSM 101675 / C91 / Nm57), this protein is Chaperone protein DnaK.